The following is a 304-amino-acid chain: Hairy/enhancer-of-split related with YRPW motif protein 1 (304 aa).

The disordered stretch occupies residues 1–52; that stretch reads MKRAHPEYSSSDSELDETIEVEKESADENGNLSSALGSMSPTTSSQILARKR. The span at 28–47 shows a compositional bias: polar residues; the sequence is ENGNLSSALGSMSPTTSSQI. Residues 48-117 form a transcriptional repression and interaction with NCOR1 and SIN3A region; that stretch reads LARKRRRGII…GGKGYFDAHA (70 aa). One can recognise a bHLH domain in the interval 49-104; the sequence is ARKRRRGIIEKRRRDRINNSLSELRRLVPSAFEKQGSAKLEKAEILQMTVDHLKML. The Orange domain maps to 122–158; that stretch reads YRSLGFRECLAEVARYLSIIEGLDASDPLRVRLVSHL. The segment at 196 to 234 is disordered; sequence LPQNGHGNAGTTASPTEPHHQGRLGSAHPEAPALRAPPS. Residues 200–210 are compositionally biased toward polar residues; it reads GHGNAGTTASP. Residues 294–297 carry the YRPW motif motif; that stretch reads YRPW.

The protein belongs to the HEY family. Self-associates. Interacts with HES1 and HEYL. Interacts with HDAC1, NCOR1 and SIN3A. Interacts with GATA4 and GATA6. Interacts with CCDC89/BOIP. In terms of tissue distribution, expressed in the somitic mesoderm, the central nervous system, the kidney, the heart, nasal epithelium, and limbs.

It is found in the nucleus. Transcriptional repressor which binds preferentially to the canonical E box sequence 5'-CACGTG-3'. Downstream effector of Notch signaling required for cardiovascular development. Specifically required for the Notch-induced endocardial epithelial to mesenchymal transition, which is itself criticial for cardiac valve and septum development. May be required in conjunction with HEY2 to specify arterial cell fate or identity. Promotes maintenance of neuronal precursor cells and glial versus neuronal fate specification. Represses transcription by the cardiac transcriptional activators GATA4 and GATA6 and by the neuronal bHLH factors ASCL1/MASH1 and NEUROD4/MATH3. Involved in the regulation of liver cancer cells self-renewal. This chain is Hairy/enhancer-of-split related with YRPW motif protein 1 (HEY1), found in Homo sapiens (Human).